The following is a 518-amino-acid chain: MPNIDLPTLEAFVHAIPQNYKGPGGAVAVVRNGEIVLRHAWGFADLAARKAMTPETRMPICSVSKQFTCAVLLDCIGEPEMLDSALAAYLDQFEDGRPAVRDLCNNQSGLRDYWALTVLCGAAPEGIFLPDQAQNLLRRLKTTHFAPGTHYSYCNGNFRILADLIEQHTGRSLADLLAERIFAPAAMKTAELIPDTALFNECTGYEGDTVRGFLPAINRIHWLGDAGICASLDDMIAWEQFIDRTRHDENGLYRRLSSPQTFADGAPAPYGFGLKFEETGGKRLTGHGGALRGWRCQRWHCADERISTIVMFNFEGNASDAALKMMNAALGIPPAKPVRAQANPGWFGSWLNPETGLVLSLEDAGGGRMKARFGTGPEKMDISGENEAQSSMTTLRRDGDMIHLARKDENLHLAMHRLKGEARQDIAGRYRSDELEADLLLVSEGGAIYGAFEGFLGKSDMYPLYAAGPDVWLLPVQRSMDAPSPGEWKLVFHRDAAGRITGVTVGCWLARGVEYKRL.

Residue serine 62 is the Nucleophile of the active site. The Proton donor/acceptor role is filled by lysine 65. The disordered stretch occupies residues 373-392; that stretch reads FGTGPEKMDISGENEAQSSM. The segment at 477–487 is important for specificity; that stretch reads QRSMDAPSPGE. Position 481 (aspartate 481) interacts with substrate.

This sequence belongs to the peptidase S12 family. In terms of assembly, homodimer.

The catalysed reaction is Release of an N-terminal D-amino acid from a peptide, Xaa-|-Yaa-, in which Xaa is preferably D-Ala, D-Ser or D-Thr. D-amino acid amides and methyl esters also are hydrolyzed, as is glycine amide.. Inhibited by beta-lactam compounds such as 6-aminopenicillic acid, 7-aminocephalosporanic acid, benzylpenicillin and ampicillin. Inhibited by p-chloromercuribenzoate. In terms of biological role, hydrolyzes N-terminal residues in D-amino acid-containing peptides. The chain is D-aminopeptidase from Brucella melitensis biotype 1 (strain ATCC 23456 / CCUG 17765 / NCTC 10094 / 16M).